A 216-amino-acid chain; its full sequence is Orotate phosphoribosyltransferase (216 aa).

Residues Arg-100, Lys-104, His-106, and Glu-126–Ser-134 each bind 5-phospho-alpha-D-ribose 1-diphosphate. Ser-130 provides a ligand contact to orotate.

Belongs to the purine/pyrimidine phosphoribosyltransferase family. PyrE subfamily. Homodimer. Interacts with BrxC. Mg(2+) is required as a cofactor.

It carries out the reaction orotidine 5'-phosphate + diphosphate = orotate + 5-phospho-alpha-D-ribose 1-diphosphate. It functions in the pathway pyrimidine metabolism; UMP biosynthesis via de novo pathway; UMP from orotate: step 1/2. In terms of biological role, catalyzes the transfer of a ribosyl phosphate group from 5-phosphoribose 1-diphosphate to orotate, leading to the formation of orotidine monophosphate (OMP). This chain is Orotate phosphoribosyltransferase, found in Bacillus subtilis (strain 168).